Consider the following 88-residue polypeptide: MKLTCVIVAVLFLTAWTFVMADDPRDGPDTAVRGGKRFWKARNEMNSAASKLNKRECLEADYYCVLPFVGNGMCCSGICVFVCIAQKY.

An N-terminal signal peptide occupies residues 1–21; sequence MKLTCVIVAVLFLTAWTFVMA. Residues 22-53 constitute a propeptide that is removed on maturation; that stretch reads DDPRDGPDTAVRGGKRFWKARNEMNSAASKLN. Disulfide bonds link cysteine 57–cysteine 75, cysteine 64–cysteine 79, and cysteine 74–cysteine 83.

The protein belongs to the conotoxin O1 superfamily. As to expression, expressed by the venom duct.

The protein localises to the secreted. This Conus marmoreus (Marble cone) protein is Conotoxin MaIr34.